A 525-amino-acid polypeptide reads, in one-letter code: Phospho-2-dehydro-3-deoxyheptonate aldolase 1, chloroplastic (525 aa).

The segment covering 1 to 13 (MALSNASSLSTRS) has biased composition (polar residues). Residues 1–35 (MALSNASSLSTRSIYGGDLSHRPSNRQSSFTFHPA) form a disordered region. A chloroplast-targeting transit peptide spans 1-52 (MALSNASSLSTRSIYGGDLSHRPSNRQSSFTFHPAVNTKPKSVNLVTAVHAA).

The protein belongs to the class-II DAHP synthase family.

The protein localises to the plastid. It is found in the chloroplast. The enzyme catalyses D-erythrose 4-phosphate + phosphoenolpyruvate + H2O = 7-phospho-2-dehydro-3-deoxy-D-arabino-heptonate + phosphate. The protein operates within metabolic intermediate biosynthesis; chorismate biosynthesis; chorismate from D-erythrose 4-phosphate and phosphoenolpyruvate: step 1/7. This is Phospho-2-dehydro-3-deoxyheptonate aldolase 1, chloroplastic (DHS1) from Arabidopsis thaliana (Mouse-ear cress).